Consider the following 389-residue polypeptide: MSVIKMTDLDLAGKRLFIRADLNVPVKDGKVTSDARIRATIPTLKLALEKGAKVMVTSHLGRPTEGEFKPEDSLQPVVDYLKDAGFNVRLAQNYLDGVEVNEGEIVVLENVRINKGEKKNDPELGKKYAALCDVFVMDAFGTAHRAQASTYGVAEYAPVACAGPLLAAELDALGKALKEPQRPMLAIVGGSKVSTKLTVLDSLSKIADQLIVGGGIANTFIAAEGHNVGKSLYEEDLIPEAKRLAAATNIPVPVDVRVGTEFSENAPATEKSVTEVQADESIFDIGDKSAEELAKIIKSAKTILWNGPVGVFEFPNFRKGTEVISNAIAEATANGAFSIAGGGDTLAAIDLFGIKDKISYISTGGGAFLEFVEGKVLPAVEILEKRANG.

Residues 21–23, arginine 36, 59–62, arginine 112, and arginine 145 contribute to the substrate site; these read DLN and HLGR. ATP-binding positions include lysine 196, glutamate 313, and 342–345; that span reads GGDT.

It belongs to the phosphoglycerate kinase family. Monomer.

Its subcellular location is the cytoplasm. It carries out the reaction (2R)-3-phosphoglycerate + ATP = (2R)-3-phospho-glyceroyl phosphate + ADP. It participates in carbohydrate degradation; glycolysis; pyruvate from D-glyceraldehyde 3-phosphate: step 2/5. In Mannheimia succiniciproducens (strain KCTC 0769BP / MBEL55E), this protein is Phosphoglycerate kinase.